The following is a 263-amino-acid chain: 3-methyl-2-oxobutanoate hydroxymethyltransferase (263 aa).

Mg(2+) is bound by residues Asp-43 and Asp-82. 3-methyl-2-oxobutanoate is bound by residues 43–44, Asp-82, and Lys-111; that span reads DS. Mg(2+) is bound at residue Glu-113. The active-site Proton acceptor is Glu-179.

This sequence belongs to the PanB family. Homodecamer; pentamer of dimers. The cofactor is Mg(2+).

It localises to the cytoplasm. The enzyme catalyses 3-methyl-2-oxobutanoate + (6R)-5,10-methylene-5,6,7,8-tetrahydrofolate + H2O = 2-dehydropantoate + (6S)-5,6,7,8-tetrahydrofolate. It participates in cofactor biosynthesis; (R)-pantothenate biosynthesis; (R)-pantoate from 3-methyl-2-oxobutanoate: step 1/2. In terms of biological role, catalyzes the reversible reaction in which hydroxymethyl group from 5,10-methylenetetrahydrofolate is transferred onto alpha-ketoisovalerate to form ketopantoate. The protein is 3-methyl-2-oxobutanoate hydroxymethyltransferase of Neisseria gonorrhoeae (strain ATCC 700825 / FA 1090).